Consider the following 398-residue polypeptide: Lysophosphatidylserine lipase ABHD12 (398 aa).

Positions 1–16 are enriched in basic and acidic residues; sequence MRKRTEPVALEHERRT. The segment at 1–24 is disordered; the sequence is MRKRTEPVALEHERRTASGSPSAG. At 1-74 the chain is on the cytoplasmic side; the sequence is MRKRTEPVAL…RKGLCFRLRK (74 aa). Residues 75–95 traverse the membrane as a helical segment; the sequence is ILFFVLGLYVAIPFLIKLCPG. Over 96 to 398 the chain is Extracellular; the sequence is IQAKLIFLNF…LGKSEPGRQH (303 aa). An N-linked (GlcNAc...) asparagine glycan is attached at Asn123. Ser246 acts as the Nucleophile in catalysis. Residues Asp333 and His372 each act as charge relay system in the active site.

This sequence belongs to the serine esterase family.

The protein localises to the endoplasmic reticulum membrane. The enzyme catalyses 1-(9Z-octadecenoyl)-sn-glycero-3-phospho-L-serine + H2O = sn-glycero-3-phospho-L-serine + (9Z)-octadecenoate + H(+). The catalysed reaction is 1-(9Z-octadecenoyl)-sn-glycero-3-phospho-(1'-sn-glycerol) + H2O = sn-glycero-3-phospho-(1'-sn-glycerol) + (9Z)-octadecenoate + H(+). It catalyses the reaction 1-(9Z-octadecenoyl)-sn-glycero-3-phospho-(1D-myo-inositol) + H2O = sn-glycero-3-phospho-1D-myo-inositol + (9Z)-octadecenoate + H(+). It carries out the reaction 1-(9Z-octadecenoyl)-sn-glycero-3-phosphoethanolamine + H2O = sn-glycero-3-phosphoethanolamine + (9Z)-octadecenoate + H(+). The enzyme catalyses 1-(9Z-octadecenoyl)-sn-glycero-3-phosphocholine + H2O = 1-(9Z-octadecenoyl)-sn-glycerol + phosphocholine + H(+). The catalysed reaction is 2-(9Z-octadecenoyl)-glycerol + H2O = glycerol + (9Z)-octadecenoate + H(+). It catalyses the reaction 1-hexadecanoyl-sn-glycero-3-phospho-L-serine + H2O = sn-glycero-3-phospho-L-serine + hexadecanoate + H(+). It carries out the reaction 2-(5Z,8Z,11Z,14Z-eicosatetraenoyl)-glycerol + H2O = glycerol + (5Z,8Z,11Z,14Z)-eicosatetraenoate + H(+). The enzyme catalyses Hydrolyzes glycerol monoesters of long-chain fatty acids.. The catalysed reaction is 1-decanoylglycerol + H2O = decanoate + glycerol + H(+). It catalyses the reaction 1-dodecanoylglycerol + H2O = dodecanoate + glycerol + H(+). It carries out the reaction 1-tetradecanoylglycerol + H2O = tetradecanoate + glycerol + H(+). The enzyme catalyses 2-hexadecanoylglycerol + H2O = glycerol + hexadecanoate + H(+). The catalysed reaction is 1-(9Z-octadecenoyl)-glycerol + H2O = glycerol + (9Z)-octadecenoate + H(+). It catalyses the reaction 2-(9Z,12Z-octadecadienoyl)-glycerol + H2O = (9Z,12Z)-octadecadienoate + glycerol + H(+). It carries out the reaction 1-(5Z,8Z,11Z,14Z-eicosatetraenoyl)-glycerol + H2O = glycerol + (5Z,8Z,11Z,14Z)-eicosatetraenoate + H(+). The enzyme catalyses 1-(9Z,12Z-octadecadienoyl)-glycerol + H2O = (9Z,12Z)-octadecadienoate + glycerol + H(+). The catalysed reaction is 1-hexadecanoylglycerol + H2O = glycerol + hexadecanoate + H(+). It catalyses the reaction 1-octadecanoylglycerol + H2O = octadecanoate + glycerol + H(+). It carries out the reaction 1-octadecanoyl-2-(9,10-epoxyoctadecanoyl)-sn-glycero-3-phospho-L-serine + H2O = 9,10-epoxyoctadecanoate + 1-octadecanoyl-sn-glycero-3-phosphoserine + H(+). The enzyme catalyses 1-octadecanoyl-2-(10-hydroxyoctadecanoyl)-sn-glycero-3-phospho-L-serine + H2O = 1-octadecanoyl-sn-glycero-3-phosphoserine + 10-hydroxyoctadecanoate + H(+). The catalysed reaction is 1-hexadecanoyl-2-(10-hydroxyoctadecanoyl)-sn-glycero-3-phospho-L-serine + H2O = 10-hydroxyoctadecanoate + 1-hexadecanoyl-sn-glycero-3-phospho-L-serine + H(+). Its function is as follows. Lysophosphatidylserine (LPS) lipase that mediates the hydrolysis of lysophosphatidylserine, a class of signaling lipids that regulates immunological and neurological processes. Represents a major lysophosphatidylserine lipase in the brain, thereby playing a key role in the central nervous system. Also able to hydrolyze oxidized phosphatidylserine; oxidized phosphatidylserine is produced in response to severe inflammatory stress and constitutes a proapoptotic 'eat me' signal. Also has monoacylglycerol (MAG) lipase activity: hydrolyzes 2-arachidonoylglycerol (2-AG), thereby acting as a regulator of endocannabinoid signaling pathways. Has a strong preference for very-long-chain lipid substrates; substrate specificity is likely due to improved catalysis and not improved substrate binding. The chain is Lysophosphatidylserine lipase ABHD12 from Bos taurus (Bovine).